The primary structure comprises 413 residues: Multifunctional CCA protein (413 aa).

2 residues coordinate ATP: G8 and R11. CTP contacts are provided by G8 and R11. Mg(2+) contacts are provided by D21 and D23. ATP is bound by residues R91, R137, and R140. Residues R91, R137, and R140 each contribute to the CTP site. In terms of domain architecture, HD spans 228–329; the sequence is TGVHTLMTLS…VKLFDAIDAW (102 aa).

This sequence belongs to the tRNA nucleotidyltransferase/poly(A) polymerase family. Bacterial CCA-adding enzyme type 1 subfamily. In terms of assembly, monomer. Can also form homodimers and oligomers. Mg(2+) serves as cofactor. Requires Ni(2+) as cofactor.

The enzyme catalyses a tRNA precursor + 2 CTP + ATP = a tRNA with a 3' CCA end + 3 diphosphate. It carries out the reaction a tRNA with a 3' CCA end + 2 CTP + ATP = a tRNA with a 3' CCACCA end + 3 diphosphate. Catalyzes the addition and repair of the essential 3'-terminal CCA sequence in tRNAs without using a nucleic acid template. Adds these three nucleotides in the order of C, C, and A to the tRNA nucleotide-73, using CTP and ATP as substrates and producing inorganic pyrophosphate. tRNA 3'-terminal CCA addition is required both for tRNA processing and repair. Also involved in tRNA surveillance by mediating tandem CCA addition to generate a CCACCA at the 3' terminus of unstable tRNAs. While stable tRNAs receive only 3'-terminal CCA, unstable tRNAs are marked with CCACCA and rapidly degraded. The polypeptide is Multifunctional CCA protein (Salmonella choleraesuis (strain SC-B67)).